Consider the following 200-residue polypeptide: Phospholipase A2 inhibitor gamma subunit B (200 aa).

The first 19 residues, 1–19, serve as a signal peptide directing secretion; sequence MKFLLFCCLFGTFLATGMC. Cystine bridges form between C22–C46, C25–C32, C39–C67, C73–C94, C95–C100, C120–C145, C138–C165, and C171–C191.

It belongs to the CNF-like-inhibitor family. In terms of assembly, heteromer composed of subunit A and subunit B.

Its subcellular location is the secreted. In terms of biological role, inhibits the enzymatic activity of the phospholipase A2 (PLA2). In Elaphe climacophora (Japanese rat snake), this protein is Phospholipase A2 inhibitor gamma subunit B.